A 234-amino-acid polypeptide reads, in one-letter code: Proteasome subunit beta (234 aa).

Residues 1 to 35 are disordered; sequence MNPDLNMNPHDSGRTDPYAPELGEIATDEGDGENV. A propeptide spans 1-39 (removed in mature form; by autocatalysis); sequence MNPDLNMNPHDSGRTDPYAPELGEIATDEGDGENVTKTG. Thr40 functions as the Nucleophile in the catalytic mechanism.

Belongs to the peptidase T1B family. In terms of assembly, the 20S proteasome core is composed of 14 alpha and 14 beta subunits that assemble into four stacked heptameric rings, resulting in a barrel-shaped structure. The two inner rings, each composed of seven catalytic beta subunits, are sandwiched by two outer rings, each composed of seven alpha subunits. The catalytic chamber with the active sites is on the inside of the barrel. Has a gated structure, the ends of the cylinder being occluded by the N-termini of the alpha-subunits. Is capped at one or both ends by the proteasome regulatory ATPase, PAN.

The protein localises to the cytoplasm. It carries out the reaction Cleavage of peptide bonds with very broad specificity.. The formation of the proteasomal ATPase PAN-20S proteasome complex, via the docking of the C-termini of PAN into the intersubunit pockets in the alpha-rings, triggers opening of the gate for substrate entry. Interconversion between the open-gate and close-gate conformations leads to a dynamic regulation of the 20S proteasome proteolysis activity. Its function is as follows. Component of the proteasome core, a large protease complex with broad specificity involved in protein degradation. This is Proteasome subunit beta from Halorhabdus utahensis (strain DSM 12940 / JCM 11049 / AX-2).